The primary structure comprises 199 residues: MLVLGLTGSIGMGKSTTAKLFAEAGVPVYDADATVHKIYENEAVPAIEAAFPGTTLGGKVDRALLSAKVVHDPAAMKRLEGIVHPMLRAHHQQFLDDAESSGAPVAVVDVPLLFETGGEKRVDAVVVVTTSPEVQRERILARDNMTPEKLDAILARQMPDAEKRKRADFVVDTSNGLDPVRLQIREILEAAAKMPRRRD.

Residues 3-199 (VLGLTGSIGM…AAAKMPRRRD (197 aa)) form the DPCK domain. 11 to 16 (GMGKST) is a binding site for ATP.

It belongs to the CoaE family.

It is found in the cytoplasm. It carries out the reaction 3'-dephospho-CoA + ATP = ADP + CoA + H(+). Its pathway is cofactor biosynthesis; coenzyme A biosynthesis; CoA from (R)-pantothenate: step 5/5. Its function is as follows. Catalyzes the phosphorylation of the 3'-hydroxyl group of dephosphocoenzyme A to form coenzyme A. This chain is Dephospho-CoA kinase, found in Rhodopseudomonas palustris (strain ATCC BAA-98 / CGA009).